The following is a 430-amino-acid chain: Serine--tRNA ligase (430 aa).

237-239 (TAE) is an L-serine binding site. Residue 268 to 270 (RSE) participates in ATP binding. Glu291 is an L-serine binding site. Position 355 to 358 (355 to 358 (EISS)) interacts with ATP. Position 391 (Ser391) interacts with L-serine.

It belongs to the class-II aminoacyl-tRNA synthetase family. Type-1 seryl-tRNA synthetase subfamily. As to quaternary structure, homodimer. The tRNA molecule binds across the dimer.

It localises to the cytoplasm. It catalyses the reaction tRNA(Ser) + L-serine + ATP = L-seryl-tRNA(Ser) + AMP + diphosphate + H(+). The catalysed reaction is tRNA(Sec) + L-serine + ATP = L-seryl-tRNA(Sec) + AMP + diphosphate + H(+). Its pathway is aminoacyl-tRNA biosynthesis; selenocysteinyl-tRNA(Sec) biosynthesis; L-seryl-tRNA(Sec) from L-serine and tRNA(Sec): step 1/1. In terms of biological role, catalyzes the attachment of serine to tRNA(Ser). Is also able to aminoacylate tRNA(Sec) with serine, to form the misacylated tRNA L-seryl-tRNA(Sec), which will be further converted into selenocysteinyl-tRNA(Sec). The sequence is that of Serine--tRNA ligase from Escherichia fergusonii (strain ATCC 35469 / DSM 13698 / CCUG 18766 / IAM 14443 / JCM 21226 / LMG 7866 / NBRC 102419 / NCTC 12128 / CDC 0568-73).